We begin with the raw amino-acid sequence, 441 residues long: BTB/POZ domain-containing protein At2g24240 (441 aa).

The BTB domain maps to 6–76 (DRIKFNVGGR…LRTGDLNVPA (71 aa)).

Its pathway is protein modification; protein ubiquitination. Functionally, may act as a substrate-specific adapter of an E3 ubiquitin-protein ligase complex (CUL3-RBX1-BTB) which mediates the ubiquitination and subsequent proteasomal degradation of target proteins. The sequence is that of BTB/POZ domain-containing protein At2g24240 from Arabidopsis thaliana (Mouse-ear cress).